A 179-amino-acid chain; its full sequence is Large ribosomal subunit protein uL5 (179 aa).

This sequence belongs to the universal ribosomal protein uL5 family. In terms of assembly, part of the 50S ribosomal subunit; part of the 5S rRNA/L5/L18/L25 subcomplex. Contacts the 5S rRNA and the P site tRNA. Forms a bridge to the 30S subunit in the 70S ribosome.

Its function is as follows. This is one of the proteins that bind and probably mediate the attachment of the 5S RNA into the large ribosomal subunit, where it forms part of the central protuberance. In the 70S ribosome it contacts protein S13 of the 30S subunit (bridge B1b), connecting the 2 subunits; this bridge is implicated in subunit movement. Contacts the P site tRNA; the 5S rRNA and some of its associated proteins might help stabilize positioning of ribosome-bound tRNAs. This is Large ribosomal subunit protein uL5 from Neisseria meningitidis serogroup C (strain 053442).